The following is a 479-amino-acid chain: (R)-1-hydroxy-2-aminoethylphosphonate ammonia-lyase (479 aa).

Lysine 317 is modified (N6-(pyridoxal phosphate)lysine).

The protein belongs to the class-III pyridoxal-phosphate-dependent aminotransferase family. Pyridoxal 5'-phosphate is required as a cofactor.

The catalysed reaction is (1R)-(2-amino-1-hydroxyethyl)phosphonate = phosphonoacetaldehyde + NH4(+). Its function is as follows. Involved in phosphonate degradation. Functions as a lyase that catalyzes an elimination reaction on the naturally occurring compound (R)-1-hydroxy-2-aminoethylphosphonate ((R)-HAEP), releasing ammonia and generating phosphonoacetaldehyde (PAA), which can be then hydrolyzed by PhnX, encoded by an adjacent gene. Thus, catalyzes a reaction that serves to funnel (R)-HAEP into the hydrolytic pathway for aminoethylphosphonate (AEP, the most common biogenic phosphonate) degradation, expanding the scope and the usefulness of the pathway itself. Is not active toward the (S) enantiomer of HAEP or other HAEP-related compounds such as ethanolamine and D,L-isoserine, indicating a very high substrate specificity. This chain is (R)-1-hydroxy-2-aminoethylphosphonate ammonia-lyase, found in Vibrio splendidus (strain 12B01).